Consider the following 255-residue polypeptide: F-box/SPRY domain-containing protein 1 (255 aa).

The F-box domain occupies 3–51 (DPVAALCNYNVLEVIFSYLELDDLSHCSQVCKSWYHFLNDENSDVWRWH). One can recognise a B30.2/SPRY domain in the interval 61–253 (LKSDLLSSVP…VSMVYLGTPL (193 aa)).

Belongs to the FBXO45/Fsn family. Component of an E3 ubiquitin ligase complex composed of hiw and Fsn.

It is found in the synapse. It functions in the pathway protein modification; protein ubiquitination. In terms of biological role, required in the presynaptic motoneuron to down-regulate the levels of wnd and restrain synaptic terminal growth at the neuromuscular junction (NMJ). The sequence is that of F-box/SPRY domain-containing protein 1 from Drosophila sechellia (Fruit fly).